Reading from the N-terminus, the 619-residue chain is Chaperone protein HscA homolog (619 aa).

It belongs to the heat shock protein 70 family.

Its function is as follows. Chaperone involved in the maturation of iron-sulfur cluster-containing proteins. Has a low intrinsic ATPase activity which is markedly stimulated by HscB. This Acinetobacter baumannii (strain ACICU) protein is Chaperone protein HscA homolog.